The primary structure comprises 1367 residues: Flocculation protein FLO11 (1367 aa).

An N-terminal signal peptide occupies residues 1–21; that stretch reads MQRPFLLAYLVLSLLFNSALG. In terms of domain architecture, Flo11 spans 31–207; that stretch reads SSEGTSCNSI…NIDCDNNCGG (177 aa). 3 disulfides stabilise this stretch: cysteine 37-cysteine 201, cysteine 44-cysteine 179, and cysteine 141-cysteine 205. The segment covering 209–267 has biased composition (low complexity); sequence KSSTTTSSTSESSTTTSSTSESSTTTSSTSESSTTTSSTSESSTSSSTTAPATPTTTSC. Disordered regions lie at residues 209–975 and 1008–1032; these read KSST…TTSV and TTTV…PTTP. 45 consecutive repeat copies span residues 210–219, 220–229, 230–239, 240–249, 262–274, 275–287, 313–327, 328–342, 343–354, 355–369, 370–381, 382–393, 394–408, 409–420, 421–432, 433–444, 445–456, 457–471, 472–483, 484–498, 499–510, 511–525, 526–540, 541–552, 568–579, 580–594, 595–609, 610–624, 625–636, 637–651, 652–666, 667–681, 682–693, 694–705, 706–720, 721–735, 736–750, 751–762, 763–777, 778–792, 808–822, 838–852, 865–879, 937–968, and 981–1012. Residues 210–249 form a 4 X 10 AA repeats, Ser/Thr-rich region; sequence SSTTTSSTSESSTTTSSTSESSTTTSSTSESSTTTSSTSE. The 2 X 13 AA repeats, Thr-rich stretch occupies residues 262 to 287; sequence PTTTSCTKEKPTPPTTTSCTKEKPTP. Basic and acidic residues predominate over residues 281–292; the sequence is TKEKPTPPHHDT. Composition is skewed to low complexity over residues 302–900 and 910–948; these read TSKT…TVTP and TETS…STGT. The interval 313 to 852 is 22 X 15 AA approximate repeats, Ser-rich; it reads PVPTPSSSTT…SSSTTESSSA (540 aa). Residues 343-762 form a 15 X 12 AA repeats, Ser/Thr-rich region; that stretch reads PVTSSTTESS…TSSTTESSSA (420 aa). Residue asparagine 817 is glycosylated (N-linked (GlcNAc...) asparagine). The N-linked (GlcNAc...) asparagine glycan is linked to asparagine 874. Positions 937-1119 are 3 X 32 AA tandem repeats, Thr-rich; that stretch reads TTITTTVCST…SPKTVTTTVP (183 aa). A compositionally biased stretch (polar residues) spans 949-961; it reads NSAGETTSGCSPK. The span at 962 to 975 shows a compositional bias: low complexity; it reads TVTTTVPTTTTTSV. Residues 1014-1032 show a composition bias toward low complexity; that stretch reads STSPSETASESTTTSPTTP. The stretch at 1088-1119 is one 5-3 repeat; that stretch reads TTITTTVCSTGTNSAGETTSGCSPKTVTTTVP. The GPI-anchor amidated glycine moiety is linked to residue glycine 1346. A propeptide spans 1347–1367 (removed in mature form); it reads AANIKVLGNFMWLLLALPVVF.

It belongs to the flocculin family. Highly divergent. Post-translationally, extensively O-mannosylated. The GPI-anchor is attached to the protein in the endoplasmic reticulum and serves to target the protein to the cell surface. There, the glucosamine-inositol phospholipid moiety is cleaved off and the GPI-modified mannoprotein is covalently attached via its lipidless GPI glycan remnant to the 1,6-beta-glucan of the outer cell wall layer. In terms of processing, a soluble form is probably produced by proteolytic cleavage at the cell surface (shedding).

It localises to the secreted. The protein resides in the cell wall. It is found in the membrane. Its function is as follows. Homophilic binding protein that enables kin discrimination in heterogeneous yeast populations by mediating homotypic cell-cell interactions during flocculation, a reversible and asexual process in which cells adhere to form aggregates (flocs). Plays a role in cell-substrate adhesion, haploid invasive growth, diploid pseudohyphae formation and biofilm (flor) development. Adhesive activity is inhibited by mannose, but not by glucose, maltose, sucrose or galactose. The polypeptide is Flocculation protein FLO11 (Saccharomyces cerevisiae (strain ATCC 204508 / S288c) (Baker's yeast)).